A 1163-amino-acid chain; its full sequence is E3 ubiquitin-protein ligase TRIM33 (1163 aa).

Residues 1 to 119 are disordered; that stretch reads MEVEASGTED…ASTSSSSSTP (119 aa). Residues 27 to 38 are compositionally biased toward basic and acidic residues; that stretch reads TETKEAADEAKS. Positions 45 to 54 are enriched in low complexity; the sequence is TPTTSSDSSS. Residues 72–87 are compositionally biased toward pro residues; that stretch reads DPPPPPPPPPPPPPST. Residues 88–99 show a composition bias toward low complexity; sequence PADSTAAAASPA. The segment at 129–188 adopts an RING-type zinc-finger fold; it reads CAVCKQSLQNRDCEPKLLPCLHSFCLKCIPQPDRKITMPVQGPHGQDTRIVNVMRCTVCH. The segment at 215–268 adopts a B box-type 1; atypical zinc-finger fold; it reads NSTQVCTSCEDNASAIGFCVECGEWLCKTCIEAHQRVKFTKDHKIRKKEEVSPE. Zn(2+) is bound by residues Cys-220, Cys-223, Cys-244, His-257, Cys-280, His-283, Cys-303, and His-308. The segment at 275-316 adopts a B box-type 2 zinc-finger fold; it reads QRPVFCPVHKQEALKLFCETCDTLTCRDCQLLEHKEHRYQFL. A coiled-coil region spans residues 345–369; that stretch reads ASEVQKRLKEVAETHKKVEHEIKIA. The segment covering 524–533 has biased composition (low complexity); sequence MQQAAIAQKH. Disordered stretches follow at residues 524–555, 575–599, 656–706, 753–848, and 867–918; these read MQQAAIAQKHQQQHQHHQQQQHQHQHQQQQQQ, QIQQQMRIASQMSQHPRQGAPQMIQ, LQRQ…VITP, TVGP…PLPI, and NVKS…KEDD. The segment covering 534 to 548 has biased composition (basic residues); that stretch reads QQQHQHHQQQQHQHQ. Over residues 580–590 the composition is skewed to polar residues; it reads MRIASQMSQHP. 2 stretches are compositionally biased toward low complexity: residues 678–691 and 753–797; these read SAANPTSPTSASMA and TVGP…SGTT. Positions 821 to 830 are enriched in basic and acidic residues; it reads KTERTKDGRR. Over residues 870-889 the composition is skewed to polar residues; sequence SEPQSDNLSSCTNPNSRATL. A PHD-type zinc finger spans residues 921-968; the sequence is EDWCAVCQNGGELLCCDHCPKVFHITCHIPTLKSSPSGDWMCTFCRNL. In terms of domain architecture, Bromo spans 991 to 1114; sequence AMSPEEQRRC…LYFEERLLEI (124 aa). Positions 1128 to 1147 are disordered; the sequence is TQIEAEKEDSDDSDDDIIQP. Positions 1133–1144 are enriched in acidic residues; that stretch reads EKEDSDDSDDDI.

It localises to the nucleus. The catalysed reaction is S-ubiquitinyl-[E2 ubiquitin-conjugating enzyme]-L-cysteine + [acceptor protein]-L-lysine = [E2 ubiquitin-conjugating enzyme]-L-cysteine + N(6)-ubiquitinyl-[acceptor protein]-L-lysine.. Its pathway is protein modification; protein ubiquitination. May act as an E3 ubiquitin-protein ligase and a transcriptional repressor. Involved in the regulation of embryonic and adult hematopoiesis. Required for normal development and survival of both committed erythroid progenitor cells and posterior mesenchymal cells. The polypeptide is E3 ubiquitin-protein ligase TRIM33 (trim33) (Danio rerio (Zebrafish)).